Consider the following 256-residue polypeptide: Proteasome subunit alpha-type 8 (256 aa).

It belongs to the peptidase T1A family. Component of the outer alpha-ring of the 20S proteasome core which is composed of 28 subunits that are arranged in four stacked rings, resulting in a barrel-shaped structure. The catalytic chamber with the active sites is on the inside of the barrel. Interacts with canonical subunits of the spermatoproteasome, including proteasome activators PSME4 (also called PA200) and PSME3 (also called PA28-gamma). Interacts with proteasome-interacting proteins chaperones, ubiquitin ligases and ubiquitin specific proteases. Interacts with meiotic proteins cyclin dependent kinase CDK1 and the ATPase TRIP13 as well as proteins of the synaptonemal complex SIX6OS1 and SYCE3.

It localises to the nucleus. Its function is as follows. Component of the spermatoproteasome, a proteasome specifically found in testis that promotes acetylation-dependent degradation of histones, thereby participating actively to the exchange of histones during spermatogenesis. The proteasome is a protein complex that degrades unneeded or damaged proteins by proteolysis, a chemical reaction that breaks peptide bonds. Required for 20S core proteasome assembly, essential for the degradation of meiotic proteins RAD51 and RPA1 at late prophase I and the progression of meiosis I during spermatogenesis. Localizes to the synaptonemal complex, a 'zipper'-like structure that holds homologous chromosome pairs in synapsis during meiotic prophase I. This is Proteasome subunit alpha-type 8 (PSMA8) from Homo sapiens (Human).